Reading from the N-terminus, the 290-residue chain is ATP synthase gamma chain (290 aa).

Belongs to the ATPase gamma chain family. F-type ATPases have 2 components, CF(1) - the catalytic core - and CF(0) - the membrane proton channel. CF(1) has five subunits: alpha(3), beta(3), gamma(1), delta(1), epsilon(1). CF(0) has three main subunits: a, b and c.

Its subcellular location is the cell membrane. Produces ATP from ADP in the presence of a proton gradient across the membrane. The gamma chain is believed to be important in regulating ATPase activity and the flow of protons through the CF(0) complex. The polypeptide is ATP synthase gamma chain (Listeria innocua serovar 6a (strain ATCC BAA-680 / CLIP 11262)).